We begin with the raw amino-acid sequence, 309 residues long: Homoserine kinase (309 aa).

91–101 is an ATP binding site; sequence PLARGLGSSAA.

The protein belongs to the GHMP kinase family. Homoserine kinase subfamily.

The protein resides in the cytoplasm. The enzyme catalyses L-homoserine + ATP = O-phospho-L-homoserine + ADP + H(+). The protein operates within amino-acid biosynthesis; L-threonine biosynthesis; L-threonine from L-aspartate: step 4/5. Functionally, catalyzes the ATP-dependent phosphorylation of L-homoserine to L-homoserine phosphate. The polypeptide is Homoserine kinase (Bacillus velezensis (strain DSM 23117 / BGSC 10A6 / LMG 26770 / FZB42) (Bacillus amyloliquefaciens subsp. plantarum)).